Consider the following 180-residue polypeptide: MGNFHATTIFAVHHNGECAMAGDGQVTMGNAVVMKHTARKVRRLFQGKVLAGFAGSVADAFTLFEMFEGKLEEYNGNLQRAAVEMAKQWRGDKMLRQLEAMLIVMDKTTMLLVSGTGEVIEPDDGILAIGSGGNYALSAGRALKQYASEHLTAKQIAKASLEIAGDICVYTNHNIIVEEL.

The active site involves Thr7. Na(+) contacts are provided by Gly165, Cys168, and Thr171.

This sequence belongs to the peptidase T1B family. HslV subfamily. A double ring-shaped homohexamer of HslV is capped on each side by a ring-shaped HslU homohexamer. The assembly of the HslU/HslV complex is dependent on binding of ATP.

It is found in the cytoplasm. The enzyme catalyses ATP-dependent cleavage of peptide bonds with broad specificity.. Allosterically activated by HslU binding. Functionally, protease subunit of a proteasome-like degradation complex believed to be a general protein degrading machinery. The polypeptide is ATP-dependent protease subunit HslV (Bacillus cereus (strain G9842)).